The sequence spans 742 residues: Phosphoribosylformylglycinamidine synthase subunit PurL (742 aa).

The active site involves histidine 53. The ATP site is built by tyrosine 56 and lysine 95. A Mg(2+)-binding site is contributed by glutamate 97. Substrate is bound by residues 98 to 101 (SHNH) and arginine 120. Histidine 99 functions as the Proton acceptor in the catalytic mechanism. Aspartate 121 contacts Mg(2+). Glutamine 245 provides a ligand contact to substrate. Residue aspartate 275 participates in Mg(2+) binding. A substrate-binding site is contributed by 319–321 (ESQ). Residues aspartate 502 and glycine 539 each contribute to the ATP site. Asparagine 540 contributes to the Mg(2+) binding site. Serine 542 lines the substrate pocket.

The protein belongs to the FGAMS family. Monomer. Part of the FGAM synthase complex composed of 1 PurL, 1 PurQ and 2 PurS subunits.

The protein resides in the cytoplasm. The enzyme catalyses N(2)-formyl-N(1)-(5-phospho-beta-D-ribosyl)glycinamide + L-glutamine + ATP + H2O = 2-formamido-N(1)-(5-O-phospho-beta-D-ribosyl)acetamidine + L-glutamate + ADP + phosphate + H(+). It participates in purine metabolism; IMP biosynthesis via de novo pathway; 5-amino-1-(5-phospho-D-ribosyl)imidazole from N(2)-formyl-N(1)-(5-phospho-D-ribosyl)glycinamide: step 1/2. Its function is as follows. Part of the phosphoribosylformylglycinamidine synthase complex involved in the purines biosynthetic pathway. Catalyzes the ATP-dependent conversion of formylglycinamide ribonucleotide (FGAR) and glutamine to yield formylglycinamidine ribonucleotide (FGAM) and glutamate. The FGAM synthase complex is composed of three subunits. PurQ produces an ammonia molecule by converting glutamine to glutamate. PurL transfers the ammonia molecule to FGAR to form FGAM in an ATP-dependent manner. PurS interacts with PurQ and PurL and is thought to assist in the transfer of the ammonia molecule from PurQ to PurL. The polypeptide is Phosphoribosylformylglycinamidine synthase subunit PurL (Lactobacillus acidophilus (strain ATCC 700396 / NCK56 / N2 / NCFM)).